Consider the following 691-residue polypeptide: DNA-directed RNA polymerase subunit beta' (691 aa).

Zn(2+)-binding residues include cysteine 69, cysteine 71, cysteine 87, and cysteine 90. Mg(2+) contacts are provided by aspartate 489, aspartate 491, and aspartate 493.

It belongs to the RNA polymerase beta' chain family. RpoC1 subfamily. In terms of assembly, in plastids the minimal PEP RNA polymerase catalytic core is composed of four subunits: alpha, beta, beta', and beta''. When a (nuclear-encoded) sigma factor is associated with the core the holoenzyme is formed, which can initiate transcription. Mg(2+) serves as cofactor. The cofactor is Zn(2+).

The protein localises to the plastid. The protein resides in the chloroplast. It catalyses the reaction RNA(n) + a ribonucleoside 5'-triphosphate = RNA(n+1) + diphosphate. In terms of biological role, DNA-dependent RNA polymerase catalyzes the transcription of DNA into RNA using the four ribonucleoside triphosphates as substrates. The chain is DNA-directed RNA polymerase subunit beta' from Jasminum nudiflorum (Winter jasmine).